The primary structure comprises 141 residues: Nucleoside diphosphate kinase (141 aa).

6 residues coordinate ATP: Lys11, Phe59, Arg87, Thr93, Arg104, and Asn114. His117 acts as the Pros-phosphohistidine intermediate in catalysis.

The protein belongs to the NDK family. It depends on Mg(2+) as a cofactor.

The protein localises to the cytoplasm. It carries out the reaction a 2'-deoxyribonucleoside 5'-diphosphate + ATP = a 2'-deoxyribonucleoside 5'-triphosphate + ADP. It catalyses the reaction a ribonucleoside 5'-diphosphate + ATP = a ribonucleoside 5'-triphosphate + ADP. In terms of biological role, major role in the synthesis of nucleoside triphosphates other than ATP. The ATP gamma phosphate is transferred to the NDP beta phosphate via a ping-pong mechanism, using a phosphorylated active-site intermediate. This Staphylothermus marinus (strain ATCC 43588 / DSM 3639 / JCM 9404 / F1) protein is Nucleoside diphosphate kinase.